Reading from the N-terminus, the 327-residue chain is Methionyl-tRNA formyltransferase (327 aa).

121–124 (SLLP) is a binding site for (6S)-5,6,7,8-tetrahydrofolate.

This sequence belongs to the Fmt family.

The catalysed reaction is L-methionyl-tRNA(fMet) + (6R)-10-formyltetrahydrofolate = N-formyl-L-methionyl-tRNA(fMet) + (6S)-5,6,7,8-tetrahydrofolate + H(+). Its function is as follows. Attaches a formyl group to the free amino group of methionyl-tRNA(fMet). The formyl group appears to play a dual role in the initiator identity of N-formylmethionyl-tRNA by promoting its recognition by IF2 and preventing the misappropriation of this tRNA by the elongation apparatus. The protein is Methionyl-tRNA formyltransferase of Burkholderia pseudomallei (strain 668).